The following is a 503-amino-acid chain: Probable cytosol aminopeptidase (503 aa).

The Mn(2+) site is built by lysine 270 and aspartate 275. The active site involves lysine 282. Aspartate 293, aspartate 352, and glutamate 354 together coordinate Mn(2+). The active site involves arginine 356.

The protein belongs to the peptidase M17 family. Mn(2+) is required as a cofactor.

It is found in the cytoplasm. The catalysed reaction is Release of an N-terminal amino acid, Xaa-|-Yaa-, in which Xaa is preferably Leu, but may be other amino acids including Pro although not Arg or Lys, and Yaa may be Pro. Amino acid amides and methyl esters are also readily hydrolyzed, but rates on arylamides are exceedingly low.. The enzyme catalyses Release of an N-terminal amino acid, preferentially leucine, but not glutamic or aspartic acids.. Its function is as follows. Presumably involved in the processing and regular turnover of intracellular proteins. Catalyzes the removal of unsubstituted N-terminal amino acids from various peptides. The sequence is that of Probable cytosol aminopeptidase from Erwinia tasmaniensis (strain DSM 17950 / CFBP 7177 / CIP 109463 / NCPPB 4357 / Et1/99).